We begin with the raw amino-acid sequence, 133 residues long: Transmembrane protein 60 (133 aa).

4 helical membrane-spanning segments follow: residues 5–25, 35–55, 78–98, and 110–130; these read LAQR…MLVL, WFLI…MLIV, AWYL…CAKL, and FIPL…NVFF.

Its subcellular location is the membrane. The polypeptide is Transmembrane protein 60 (Tmem60) (Mus musculus (Mouse)).